The following is a 160-amino-acid chain: Protein-export protein SecB (160 aa).

This sequence belongs to the SecB family. In terms of assembly, homotetramer, a dimer of dimers. One homotetramer interacts with 1 SecA dimer.

The protein resides in the cytoplasm. Its function is as follows. One of the proteins required for the normal export of preproteins out of the cell cytoplasm. It is a molecular chaperone that binds to a subset of precursor proteins, maintaining them in a translocation-competent state. It also specifically binds to its receptor SecA. The protein is Protein-export protein SecB of Agrobacterium fabrum (strain C58 / ATCC 33970) (Agrobacterium tumefaciens (strain C58)).